Consider the following 306-residue polypeptide: UDP-3-O-acyl-N-acetylglucosamine deacetylase (306 aa).

Zn(2+) contacts are provided by His-79, His-238, and Asp-242. His-265 (proton donor) is an active-site residue.

This sequence belongs to the LpxC family. It depends on Zn(2+) as a cofactor.

The catalysed reaction is a UDP-3-O-[(3R)-3-hydroxyacyl]-N-acetyl-alpha-D-glucosamine + H2O = a UDP-3-O-[(3R)-3-hydroxyacyl]-alpha-D-glucosamine + acetate. The protein operates within glycolipid biosynthesis; lipid IV(A) biosynthesis; lipid IV(A) from (3R)-3-hydroxytetradecanoyl-[acyl-carrier-protein] and UDP-N-acetyl-alpha-D-glucosamine: step 2/6. Its function is as follows. Catalyzes the hydrolysis of UDP-3-O-myristoyl-N-acetylglucosamine to form UDP-3-O-myristoylglucosamine and acetate, the committed step in lipid A biosynthesis. The chain is UDP-3-O-acyl-N-acetylglucosamine deacetylase from Shewanella pealeana (strain ATCC 700345 / ANG-SQ1).